A 153-amino-acid chain; its full sequence is Transthyretin (153 aa).

Residues 1–19 form the signal peptide; sequence MASFKSFLLLALLAIVSEA. Cysteine 34 is subject to Sulfocysteine. Residues lysine 39 and glutamate 78 each coordinate L-thyroxine. Asparagine 81 is a glycosylation site (N-linked (GlcNAc...) asparagine). Serine 141 contributes to the L-thyroxine binding site.

This sequence belongs to the transthyretin family. Homotetramer. Dimer of dimers. In the homotetramer, subunits assemble around a central channel that can accommodate two ligand molecules. Interacts with rbp4. In terms of processing, sulfonation of the reactive cysteine Cys-34 enhances the stability of the native conformation of TTR, avoiding misassembly of the protein leading to amyloid formation. Detected in plasma (at protein level). Expressed during metamorphosis in tadpole liver, but not in tadpole brain nor adult liver. Between 1.5 and 3 days of development, also expressed in the mesoderm of the kidney.

It localises to the secreted. Thyroid hormone-binding protein, with a much higher binding affinity for triiodothyronine (T3) than for thyroxine (T4). Probably transports triiodothyronine from the bloodstream to the brain. In Xenopus laevis (African clawed frog), this protein is Transthyretin (ttr).